A 233-amino-acid chain; its full sequence is Lectin (233 aa).

Asn26 and Asn108 each carry an N-linked (GlcNAc...) asparagine glycan. Residues Glu118 and Asp120 each coordinate Mn(2+). Ca(2+)-binding residues include Asp120, Trp122, Asn124, and Glu129. Glu129 and His134 together coordinate Mn(2+).

It belongs to the leguminous lectin family. In terms of assembly, monomer.

It is found in the secreted. Its function is as follows. Has metal-independent hemagglutinating activity towards erythrocytes from rabbit and human. Hemagglutinating activity is inhibited by glycoproteins fetuin, asialo-fetuin, thyroglobulin and azocasein but not by free carbohydrates. Inhibits ADP- and epinephrin-induced but not collagen-, fibrinogen, thrombin- or arachidonic acid-induced platelet aggregation in vitro. Has anticoagulant activity in vitro. The sequence is that of Lectin from Bauhinia forficata (Brazilian orchid-tree).